Reading from the N-terminus, the 320-residue chain is GDSL esterase/lipase At3g43570 (320 aa).

The first 19 residues, 1–19, serve as a signal peptide directing secretion; sequence MKIQIIWLTLVLIVVEANA. N-linked (GlcNAc...) asparagine glycosylation is present at asparagine 25. The active-site Nucleophile is serine 37. A glycan (N-linked (GlcNAc...) asparagine) is linked at asparagine 287. Residues aspartate 295 and histidine 298 contribute to the active site.

The protein belongs to the 'GDSL' lipolytic enzyme family.

Its subcellular location is the secreted. In Arabidopsis thaliana (Mouse-ear cress), this protein is GDSL esterase/lipase At3g43570.